Reading from the N-terminus, the 292-residue chain is Probable 2-(5''-triphosphoribosyl)-3'-dephosphocoenzyme-A synthase (292 aa).

Belongs to the CitG/MdcB family.

The catalysed reaction is 3'-dephospho-CoA + ATP = 2'-(5''-triphospho-alpha-D-ribosyl)-3'-dephospho-CoA + adenine. This Shigella boydii serotype 18 (strain CDC 3083-94 / BS512) protein is Probable 2-(5''-triphosphoribosyl)-3'-dephosphocoenzyme-A synthase.